Reading from the N-terminus, the 423-residue chain is Glucuronoxylanase XynC (423 aa).

The first 33 residues, 1–33 (MMSSVKKTICVLLVCFTMMSVMLLGPGVTEVSA), serve as a signal peptide directing secretion. Glu172 (proton donor) is an active-site residue. Glu261 serves as the catalytic Nucleophile.

It belongs to the glycosyl hydrolase 30 family.

It is found in the secreted. The catalysed reaction is Endohydrolysis of (1-&gt;4)-beta-D-xylosyl links in some glucuronoarabinoxylans.. The protein operates within glycan degradation; xylan degradation. Its function is as follows. Catalyzes the depolymerization of methylglucuronoxylan (MeGAXn). It cleaves the beta-1,4-xylosidic bond penultimate to that linking carbon one of the xylose residue substituted with alpha-1,2-linked 4-O-methyl-D-glucuronate (MeGA). The protein is Glucuronoxylanase XynC (xynC) of Bacillus subtilis.